The following is a 374-amino-acid chain: Serine/threonine-protein kinase-transforming protein mos (374 aa).

The Protein kinase domain occupies 94–370 (VCLMHRLGSG…LLQRDLKAFR (277 aa)). ATP is bound by residues 100–108 (LGSGGFGSV) and K121. D229 (proton acceptor) is an active-site residue.

Belongs to the protein kinase superfamily. Ser/Thr protein kinase family.

The enzyme catalyses L-seryl-[protein] + ATP = O-phospho-L-seryl-[protein] + ADP + H(+). It catalyses the reaction L-threonyl-[protein] + ATP = O-phospho-L-threonyl-[protein] + ADP + H(+). In Mus musculus (Mouse), this protein is Serine/threonine-protein kinase-transforming protein mos (V-MOS).